Reading from the N-terminus, the 192-residue chain is UPF0149 protein YE3397 (192 aa).

It belongs to the UPF0149 family.

In Yersinia enterocolitica serotype O:8 / biotype 1B (strain NCTC 13174 / 8081), this protein is UPF0149 protein YE3397.